A 695-amino-acid chain; its full sequence is MSNFDDLQILDQLQTSARFRGDTRIRRFKGSNNSKSPFGLNPSSRISQWPRITFIRAKDNYNPAEELCQLIDEQNAHNEAKHQSKEIMLPKETNVKSCEDLSKTGEIKALDIVLFKAITSKGDTLKVKKIPEYAEAFDTTKNVEVSSFPEKSMNENVLIQHSLNLAPSDKEISSTEESEQLCYKEQESEKELYSKDNDDSLDILNVPNLVNDDIANNNAAPPPPLAQAQEQLSTENEDEFDIDDTTDKMTTFTMNKFADLSVLEEDDDDEDEDEELEGEKEEEEEEKEKPEISNYDETEGKVNFSLEDSESLEFDEGSDDYDYAKLTTELVGNTDSLAEDEDDILEEDEDEDEEELLAIFDASDDSEIEAYLSIGDTLQNDFTIYDYDSEDEEYNNPSTQKTEKVSQSKKGAKVKEEKGLKKDRKLPKKMRKAQKKLERKAGKAVAARMGDAFSNSLDDESMNLYAELQEQWLKDKSKKARRRAEREKLRSEGLLGKKSKKKLLRESQKPSSSDSDNASLTRIDKIFINDVYQRMQQFKHSAIEEISLPPCRKYVRRLVHALANDLNLKSRSYGSGNKRYTMLSKTHKFDASSVDLVSLTRIMERLQTRVEYQSFSKSGRKSRMTVSSVRSSKATRVYDGQIVGEDAPEISKENPGRRLLEKLGWYAGKGLGHPENEGSKDSLRAIVKVSRSGLG.

6 disordered regions span residues 168–200 (SDKEISSTEESEQLCYKEQESEKELYSKDNDDS), 213–242 (DIANNNAAPPPPLAQAQEQLSTENEDEFDI), 257–317 (FADL…FDEG), 332–351 (GNTDSLAEDEDDILEEDEDE), 388–448 (DSED…VAAR), and 475–517 (DKSK…DSDN). Basic and acidic residues predominate over residues 182-198 (CYKEQESEKELYSKDND). 3 stretches are compositionally biased toward acidic residues: residues 262–286 (VLEEDDDDEDEDEELEGEKEEEEEE), 307–317 (EDSESLEFDEG), and 337–351 (LAEDEDDILEEDEDE). Positions 421–434 (KKDRKLPKKMRKAQ) are enriched in basic residues. One can recognise an R3H domain in the interval 525 to 587 (KIFINDVYQR…KRYTMLSKTH (63 aa)). Residues 652–695 (KENPGRRLLEKLGWYAGKGLGHPENEGSKDSLRAIVKVSRSGLG) form the G-patch domain.

The protein localises to the cytoplasm. The protein is G-patch and R3H domain-containing protein C30B4.02c of Schizosaccharomyces pombe (strain 972 / ATCC 24843) (Fission yeast).